Here is a 32-residue protein sequence, read N- to C-terminus: VACVYRTCDKDCTSRKYRSGKCINNACKCYPY.

3 cysteine pairs are disulfide-bonded: Cys3-Cys22, Cys8-Cys12, and Cys27-Cys29. The residue at position 32 (Tyr32) is a Tyrosine amide.

This sequence belongs to the short scorpion toxin superfamily. Potassium channel inhibitor family. Alpha-KTx 10 subfamily. Expressed by the venom gland.

It localises to the secreted. Blocks Shaker B potassium-channels (Kv1.1/KCNA1 sub-family). The chain is Potassium channel toxin alpha-KTx 10.2 from Centruroides noxius (Mexican scorpion).